The following is a 118-amino-acid chain: UPF0295 protein BCE33L0445 (118 aa).

Transmembrane regions (helical) follow at residues 12-32 (IRTFALSLVFIGLFIAYLGVF) and 43-63 (FMMVGFLAVIASTVVYFWIGM).

It belongs to the UPF0295 family.

It is found in the cell membrane. The sequence is that of UPF0295 protein BCE33L0445 from Bacillus cereus (strain ZK / E33L).